The following is a 287-amino-acid chain: Acetyl-coenzyme A carboxylase carboxyl transferase subunit beta (287 aa).

The CoA carboxyltransferase N-terminal domain occupies 25-287 (VWTKCSACEQ…KMLNTHVIEE (263 aa)). 4 residues coordinate Zn(2+): Cys-29, Cys-32, Cys-48, and Cys-51. The C4-type zinc finger occupies 29–51 (CSACEQVLYRAELERNLEVCPKC).

The protein belongs to the AccD/PCCB family. Acetyl-CoA carboxylase is a heterohexamer composed of biotin carboxyl carrier protein (AccB), biotin carboxylase (AccC) and two subunits each of ACCase subunit alpha (AccA) and ACCase subunit beta (AccD). Zn(2+) serves as cofactor.

It is found in the cytoplasm. The enzyme catalyses N(6)-carboxybiotinyl-L-lysyl-[protein] + acetyl-CoA = N(6)-biotinyl-L-lysyl-[protein] + malonyl-CoA. The protein operates within lipid metabolism; malonyl-CoA biosynthesis; malonyl-CoA from acetyl-CoA: step 1/1. In terms of biological role, component of the acetyl coenzyme A carboxylase (ACC) complex. Biotin carboxylase (BC) catalyzes the carboxylation of biotin on its carrier protein (BCCP) and then the CO(2) group is transferred by the transcarboxylase to acetyl-CoA to form malonyl-CoA. The polypeptide is Acetyl-coenzyme A carboxylase carboxyl transferase subunit beta (Aeromonas salmonicida (strain A449)).